We begin with the raw amino-acid sequence, 312 residues long: Aspartate carbamoyltransferase catalytic subunit (312 aa).

Carbamoyl phosphate-binding residues include R58 and T59. K86 lines the L-aspartate pocket. Carbamoyl phosphate contacts are provided by R108, H136, and Q139. Positions 169 and 223 each coordinate L-aspartate. Carbamoyl phosphate contacts are provided by G264 and P265.

Belongs to the aspartate/ornithine carbamoyltransferase superfamily. ATCase family. In terms of assembly, heterododecamer (2C3:3R2) of six catalytic PyrB chains organized as two trimers (C3), and six regulatory PyrI chains organized as three dimers (R2).

The enzyme catalyses carbamoyl phosphate + L-aspartate = N-carbamoyl-L-aspartate + phosphate + H(+). It functions in the pathway pyrimidine metabolism; UMP biosynthesis via de novo pathway; (S)-dihydroorotate from bicarbonate: step 2/3. Functionally, catalyzes the condensation of carbamoyl phosphate and aspartate to form carbamoyl aspartate and inorganic phosphate, the committed step in the de novo pyrimidine nucleotide biosynthesis pathway. This is Aspartate carbamoyltransferase catalytic subunit from Endomicrobium trichonymphae.